Here is a 458-residue protein sequence, read N- to C-terminus: tRNA modification GTPase MnmE (458 aa).

(6S)-5-formyl-5,6,7,8-tetrahydrofolate is bound by residues Arg-26, Glu-88, and Arg-127. One can recognise a TrmE-type G domain in the interval 224–378 (GLSTAIIGRP…IEDRINQLFF (155 aa)). Asn-234 lines the K(+) pocket. GTP-binding positions include 234 to 239 (NVGKSS), 253 to 259 (TDIAGTT), and 278 to 281 (DTAG). Ser-238 is a binding site for Mg(2+). K(+) is bound by residues Thr-253, Ile-255, and Thr-258. Mg(2+) is bound at residue Thr-259. Lys-458 serves as a coordination point for (6S)-5-formyl-5,6,7,8-tetrahydrofolate.

The protein belongs to the TRAFAC class TrmE-Era-EngA-EngB-Septin-like GTPase superfamily. TrmE GTPase family. In terms of assembly, homodimer. Heterotetramer of two MnmE and two MnmG subunits. K(+) is required as a cofactor.

It is found in the cytoplasm. Its function is as follows. Exhibits a very high intrinsic GTPase hydrolysis rate. Involved in the addition of a carboxymethylaminomethyl (cmnm) group at the wobble position (U34) of certain tRNAs, forming tRNA-cmnm(5)s(2)U34. This is tRNA modification GTPase MnmE from Streptococcus pyogenes serotype M6 (strain ATCC BAA-946 / MGAS10394).